The sequence spans 244 residues: Flavin-dependent thymidylate synthase (244 aa).

The region spanning 2-207 (VRVTLVNYTK…DIRPIIKWAK (206 aa)) is the ThyX domain. FAD is bound by residues Ser-56, 80–82 (RHR), and Gln-88. DUMP-binding positions include 77–80 (QLVR), 88–92 (QQSQR), and Arg-146. The ThyX motif signature appears at 80 to 90 (RHRIASYTQQS). Residues 162–164 (NLR) and His-168 each bind FAD. Residue Arg-173 participates in dUMP binding. The Involved in ionization of N3 of dUMP, leading to its activation role is filled by Arg-173.

This sequence belongs to the thymidylate synthase ThyX family. In terms of assembly, homotetramer. FAD serves as cofactor.

The catalysed reaction is dUMP + (6R)-5,10-methylene-5,6,7,8-tetrahydrofolate + NADPH + H(+) = dTMP + (6S)-5,6,7,8-tetrahydrofolate + NADP(+). Its pathway is pyrimidine metabolism; dTTP biosynthesis. Catalyzes the reductive methylation of 2'-deoxyuridine-5'-monophosphate (dUMP) to 2'-deoxythymidine-5'-monophosphate (dTMP) while utilizing 5,10-methylenetetrahydrofolate (mTHF) as the methyl donor, and NADPH and FADH(2) as the reductant. In Pyrococcus furiosus (strain ATCC 43587 / DSM 3638 / JCM 8422 / Vc1), this protein is Flavin-dependent thymidylate synthase.